The sequence spans 284 residues: Acetylglutamate kinase (284 aa).

Substrate-binding positions include 64 to 65 (GG), R86, and N179.

The protein belongs to the acetylglutamate kinase family. ArgB subfamily.

It is found in the cytoplasm. It catalyses the reaction N-acetyl-L-glutamate + ATP = N-acetyl-L-glutamyl 5-phosphate + ADP. The protein operates within amino-acid biosynthesis; L-arginine biosynthesis; N(2)-acetyl-L-ornithine from L-glutamate: step 2/4. Its function is as follows. Catalyzes the ATP-dependent phosphorylation of N-acetyl-L-glutamate. The polypeptide is Acetylglutamate kinase (Prochlorococcus marinus subsp. pastoris (strain CCMP1986 / NIES-2087 / MED4)).